Here is a 2471-residue protein sequence, read N- to C-terminus: MPALRPALLWALLALWLCCAAPAHALQCRDGYEPCVNEGMCVTYHNGTGYCKCPEGFLGEYCQHRDPCEKNRCQNGGTCVAQAMLGKATCRCASGFTGEDCQYSTSHPCFVSRPCLNGGTCHMLSRDTYECTCQVGFTGKECQWTDACLSHPCANGSTCTTVANQFSCKCLTGFTGQKCETDVNECDIPGHCQHGGTCLNLPGSYQCQCPQGFTGQYCDSLYVPCAPSPCVNGGTCRQTGDFTFECNCLPGFEGSTCERNIDDCPNHRCQNGGVCVDGVNTYNCRCPPQWTGQFCTEDVDECLLQPNACQNGGTCANRNGGYGCVCVNGWSGDDCSENIDDCAFASCTPGSTCIDRVASFSCMCPEGKAGLLCHLDDACISNPCHKGALCDTNPLNGQYICTCPQGYKGADCTEDVDECAMANSNPCEHAGKCVNTDGAFHCECLKGYAGPRCEMDINECHSDPCQNDATCLDKIGGFTCLCMPGFKGVHCELEINECQSNPCVNNGQCVDKVNRFQCLCPPGFTGPVCQIDIDDCSSTPCLNGAKCIDHPNGYECQCATGFTGVLCEENIDNCDPDPCHHGQCQDGIDSYTCICNPGYMGAICSDQIDECYSSPCLNDGRCIDLVNGYQCNCQPGTSGVNCEINFDDCASNPCIHGICMDGINRYSCVCSPGFTGQRCNIDIDECASNPCRKGATCINGVNGFRCICPEGPHHPSCYSQVNECLSNPCIHGNCTGGLSGYKCLCDAGWVGINCEVDKNECLSNPCQNGGTCDNLVNGYRCTCKKGFKGYNCQVNIDECASNPCLNQGTCFDDISGYTCHCVLPYTGKNCQTVLAPCSPNPCENAAVCKESPNFESYTCLCAPGWQGQRCTIDIDECISKPCMNHGLCHNTQGSYMCECPPGFSGMDCEEDIDDCLANPCQNGGSCMDGVNTFSCLCLPGFTGDKCQTDMNECLSEPCKNGGTCSDYVNSYTCKCQAGFDGVHCENNINECTESSCFNGGTCVDGINSFSCLCPVGFTGSFCLHEINECSSHPCLNEGTCVDGLGTYRCSCPLGYTGKNCQTLVNLCSRSPCKNKGTCVQKKAESQCLCPSGWAGAYCDVPNVSCDIAASRRGVLVEHLCQHSGVCINAGNTHYCQCPLGYTGSYCEEQLDECASNPCQHGATCSDFIGGYRCECVPGYQGVNCEYEVDECQNQPCQNGGTCIDLVNHFKCSCPPGTRGLLCEENIDDCARGPHCLNGGQCMDRIGGYSCRCLPGFAGERCEGDINECLSNPCSSEGSLDCIQLTNDYLCVCRSAFTGRHCETFVDVCPQMPCLNGGTCAVASNMPDGFICRCPPGFSGARCQSSCGQVKCRKGEQCVHTASGPRCFCPSPRDCESGCASSPCQHGGSCHPQRQPPYYSCQCAPPFSGSRCELYTAPPSTPPATCLSQYCADKARDGVCDEACNSHACQWDGGDCSLTMENPWANCSSPLPCWDYINNQCDELCNTVECLFDNFECQGNSKTCKYDKYCADHFKDNHCDQGCNSEECGWDGLDCAADQPENLAEGTLVIVVLMPPEQLLQDARSFLRALGTLLHTNLRIKRDSQGELMVYPYYGEKSAAMKKQRMTRRSLPGEQEQEVAGSKVFLEIDNRQCVQDSDHCFKNTDAAAALLASHAIQGTLSYPLVSVVSESLTPERTQLLYLLAVAVVIILFIILLGVIMAKRKRKHGSLWLPEGFTLRRDASNHKRREPVGQDAVGLKNLSVQVSEANLIGTGTSEHWVDDEGPQPKKVKAEDEALLSEEDDPIDRRPWTQQHLEAADIRRTPSLALTPPQAEQEVDVLDVNVRGPDGCTPLMLASLRGGSSDLSDEDEDAEDSSANIITDLVYQGASLQAQTDRTGEMALHLAARYSRADAAKRLLDAGADANAQDNMGRCPLHAAVAADAQGVFQILIRNRVTDLDARMNDGTTPLILAARLAVEGMVAELINCQADVNAVDDHGKSALHWAAAVNNVEATLLLLKNGANRDMQDNKEETPLFLAAREGSYEAAKILLDHFANRDITDHMDRLPRDVARDRMHHDIVRLLDEYNVTPSPPGTVLTSALSPVICGPNRSFLSLKHTPMGKKSRRPSAKSTMPTSLPNLAKEAKDAKGSRRKKSLSEKVQLSESSVTLSPVDSLESPHTYVSDTTSSPMITSPGILQASPNPMLATAAPPAPVHAQHALSFSNLHEMQPLAHGASTVLPSVSQLLSHHHIVSPGSGSAGSLSRLHPVPVPADWMNRMEVNETQYNEMFGMVLAPAEGTHPGIAPQSRPPEGKHITTPREPLPPIVTFQLIPKGSIAQPAGAPQPQSTCPPAVAGPLPTMYQIPEMARLPSVAFPTAMMPQQDGQVAQTILPAYHPFPASVGKYPTPPSQHSYASSNAAERTPSHSGHLQGEHPYLTPSPESPDQWSSSSPHSASDWSDVTTSPTPGGAGGGQRGPGTHMSEPPHNNMQVYA.

A signal peptide spans 1 to 25 (MPALRPALLWALLALWLCCAAPAHA). 4 EGF-like domains span residues 26 to 63 (LQCRDGYEPCVNEGMCVTYHNGTGYCKCPEGFLGEYCQ), 64 to 102 (HRDPCEKNRCQNGGTCVAQAMLGKATCRCASGFTGEDCQ), 105 to 143 (TSHPCFVSRPCLNGGTCHMLSRDTYECTCQVGFTGKECQ), and 144 to 180 (WTDACLSHPCANGSTCTTVANQFSCKCLTGFTGQKCE). The Extracellular segment spans residues 26-1677 (LQCRDGYEPC…SESLTPERTQ (1652 aa)). Disulfide bonds link Cys28-Cys41, Cys35-Cys51, Cys53-Cys62, Cys68-Cys79, Cys73-Cys90, Cys92-Cys101, Cys109-Cys121, Cys115-Cys131, Cys133-Cys142, Cys148-Cys159, Cys153-Cys168, Cys170-Cys179, Cys186-Cys198, Cys192-Cys207, Cys209-Cys218, Cys225-Cys236, Cys230-Cys246, Cys248-Cys257, Cys264-Cys275, Cys269-Cys284, Cys286-Cys295, Cys302-Cys315, Cys309-Cys324, Cys326-Cys335, Cys342-Cys353, Cys347-Cys362, Cys364-Cys373, Cys379-Cys390, Cys384-Cys401, Cys403-Cys412, Cys419-Cys433, Cys427-Cys442, Cys444-Cys453, Cys460-Cys471, Cys465-Cys480, Cys482-Cys491, Cys498-Cys509, Cys503-Cys518, Cys520-Cys529, Cys536-Cys547, Cys541-Cys556, Cys558-Cys567, Cys574-Cys584, Cys579-Cys593, Cys595-Cys604, Cys611-Cys622, Cys616-Cys631, Cys633-Cys642, Cys649-Cys659, Cys654-Cys668, Cys670-Cys679, Cys686-Cys697, Cys691-Cys706, Cys708-Cys717, Cys724-Cys734, Cys729-Cys743, Cys745-Cys754, Cys761-Cys772, Cys766-Cys781, Cys783-Cys792, Cys799-Cys810, Cys804-Cys819, Cys821-Cys830, Cys837-Cys848, Cys842-Cys859, Cys861-Cys870, Cys877-Cys888, Cys882-Cys897, Cys899-Cys908, Cys915-Cys926, Cys920-Cys935, Cys937-Cys946, Cys953-Cys964, Cys958-Cys973, Cys975-Cys984, Cys991-Cys1002, Cys996-Cys1011, Cys1013-Cys1022, Cys1029-Cys1040, Cys1034-Cys1049, Cys1051-Cys1060, Cys1067-Cys1078, Cys1072-Cys1087, and Cys1089-Cys1098. The N-linked (GlcNAc...) asparagine glycan is linked to Asn46. N-linked (GlcNAc...) asparagine glycosylation occurs at Asn155. The EGF-like 5; calcium-binding domain maps to 182–219 (DVNECDIPGHCQHGGTCLNLPGSYQCQCPQGFTGQYCD). Residues 221 to 258 (LYVPCAPSPCVNGGTCRQTGDFTFECNCLPGFEGSTCE) form the EGF-like 6 domain. The EGF-like 7; calcium-binding domain maps to 260–296 (NIDDCPNHRCQNGGVCVDGVNTYNCRCPPQWTGQFCT). Positions 298 to 336 (DVDECLLQPNACQNGGTCANRNGGYGCVCVNGWSGDDCS) constitute an EGF-like 8; calcium-binding domain. Residues 338-374 (NIDDCAFASCTPGSTCIDRVASFSCMCPEGKAGLLCH) enclose the EGF-like 9; calcium-binding domain. One can recognise an EGF-like 10 domain in the interval 375 to 413 (LDDACISNPCHKGALCDTNPLNGQYICTCPQGYKGADCT). An EGF-like 11; calcium-binding domain is found at 415–454 (DVDECAMANSNPCEHAGKCVNTDGAFHCECLKGYAGPRCE). One can recognise an EGF-like 12; calcium-binding domain in the interval 456–492 (DINECHSDPCQNDATCLDKIGGFTCLCMPGFKGVHCE). One can recognise an EGF-like 13; calcium-binding domain in the interval 494–530 (EINECQSNPCVNNGQCVDKVNRFQCLCPPGFTGPVCQ). The EGF-like 14; calcium-binding domain occupies 532–568 (DIDDCSSTPCLNGAKCIDHPNGYECQCATGFTGVLCE). The EGF-like 15; calcium-binding domain occupies 570-605 (NIDNCDPDPCHHGQCQDGIDSYTCICNPGYMGAICS). An EGF-like 16; calcium-binding domain is found at 607–643 (QIDECYSSPCLNDGRCIDLVNGYQCNCQPGTSGVNCE). A glycan (O-linked (Glc...) serine; alternate) is linked at Ser613. A glycan (O-linked (Xyl...) serine; alternate) is linked at Ser613. The EGF-like 17; calcium-binding domain occupies 645–680 (NFDDCASNPCIHGICMDGINRYSCVCSPGFTGQRCN). One can recognise an EGF-like 18; calcium-binding domain in the interval 682–718 (DIDECASNPCRKGATCINGVNGFRCICPEGPHHPSCY). Positions 720-755 (QVNECLSNPCIHGNCTGGLSGYKCLCDAGWVGINCE) constitute an EGF-like 19 domain. N-linked (GlcNAc...) asparagine glycosylation occurs at Asn733. The region spanning 757–793 (DKNECLSNPCQNGGTCDNLVNGYRCTCKKGFKGYNCQ) is the EGF-like 20; calcium-binding domain. Positions 795–831 (NIDECASNPCLNQGTCFDDISGYTCHCVLPYTGKNCQ) constitute an EGF-like 21; calcium-binding domain. Positions 833-871 (VLAPCSPNPCENAAVCKESPNFESYTCLCAPGWQGQRCT) constitute an EGF-like 22 domain. The region spanning 873-909 (DIDECISKPCMNHGLCHNTQGSYMCECPPGFSGMDCE) is the EGF-like 23; calcium-binding domain. In terms of domain architecture, EGF-like 24; calcium-binding spans 911-947 (DIDDCLANPCQNGGSCMDGVNTFSCLCLPGFTGDKCQ). One can recognise an EGF-like 25; calcium-binding domain in the interval 949-985 (DMNECLSEPCKNGGTCSDYVNSYTCKCQAGFDGVHCE). In terms of domain architecture, EGF-like 26; calcium-binding spans 987–1023 (NINECTESSCFNGGTCVDGINSFSCLCPVGFTGSFCL). Residues 1025-1061 (EINECSSHPCLNEGTCVDGLGTYRCSCPLGYTGKNCQ) form the EGF-like 27; calcium-binding domain. EGF-like domains follow at residues 1063–1099 (LVNLCSRSPCKNKGTCVQKKAESQCLCPSGWAGAYCD) and 1101–1147 (PNVS…SYCE). Asn1102 carries an N-linked (GlcNAc...) asparagine glycan. Intrachain disulfides connect Cys1105/Cys1126, Cys1120/Cys1135, Cys1137/Cys1146, Cys1153/Cys1164, Cys1158/Cys1173, Cys1175/Cys1184, Cys1191/Cys1202, Cys1196/Cys1211, Cys1213/Cys1222, Cys1229/Cys1241, Cys1235/Cys1250, Cys1252/Cys1261, Cys1268/Cys1281, Cys1273/Cys1290, Cys1292/Cys1301, Cys1308/Cys1319, Cys1313/Cys1331, Cys1333/Cys1342, Cys1378/Cys1389, Cys1383/Cys1400, Cys1402/Cys1411, Cys1425/Cys1448, Cys1430/Cys1443, and Cys1439/Cys1455. An EGF-like 30; calcium-binding domain is found at 1149–1185 (QLDECASNPCQHGATCSDFIGGYRCECVPGYQGVNCE). An EGF-like 31; calcium-binding domain is found at 1187–1223 (EVDECQNQPCQNGGTCIDLVNHFKCSCPPGTRGLLCE). One can recognise an EGF-like 32; calcium-binding domain in the interval 1225–1262 (NIDDCARGPHCLNGGQCMDRIGGYSCRCLPGFAGERCE). 3 consecutive EGF-like domains span residues 1264–1302 (DINECLSNPCSSEGSLDCIQLTNDYLCVCRSAFTGRHCE), 1304–1343 (FVDVCPQMPCLNGGTCAVASNMPDGFICRCPPGFSGARCQ), and 1374–1412 (CESGCASSPCQHGGSCHPQRQPPYYSCQCAPPFSGSRCE). LNR repeat units follow at residues 1425–1465 (CLSQ…PWAN), 1466–1502 (CSSPLPCWDYINNQCDELCNTVECLFDNFECQGNSKT), and 1503–1544 (CKYD…NLAE). A negative regulatory region (NRR) region spans residues 1425-1677 (CLSQYCADKA…SESLTPERTQ (253 aa)). Asn1465 carries N-linked (GlcNAc...) asparagine glycosylation. 7 cysteine pairs are disulfide-bonded: Cys1466-Cys1489, Cys1472-Cys1484, Cys1480-Cys1496, Cys1503-Cys1527, Cys1509-Cys1522, Cys1518-Cys1534, and Cys1632-Cys1639. A helical membrane pass occupies residues 1678–1698 (LLYLLAVAVVIILFIILLGVI). Residues 1699–2471 (MAKRKRKHGS…PPHNNMQVYA (773 aa)) lie on the Cytoplasmic side of the membrane. At Thr1716 the chain carries Phosphothreonine. A disordered region spans residues 1754–1788 (TSEHWVDDEGPQPKKVKAEDEALLSEEDDPIDRRP). Over residues 1774-1783 (EALLSEEDDP) the composition is skewed to acidic residues. Residue Ser1778 is modified to Phosphoserine. Thr1802 carries the phosphothreonine modification. Residue Ser1804 is modified to Phosphoserine. Thr1808 is modified (phosphothreonine). ANK repeat units follow at residues 1827 to 1871 (DGCT…SLQA), 1876 to 1905 (TGEMALHLAARYSRADAAKRLLDAGADANA), 1909 to 1939 (MGRCPLHAAVAADAQGVFQILIRNRVTDLDA), 1943 to 1972 (DGTTPLILAARLAVEGMVAELINCQADVNA), 1976 to 2005 (HGKSALHWAAAVNNVEATLLLLKNGANRDM), and 2009 to 2038 (KEETPLFLAAREGSYEAAKILLDHFANRDI). Phosphoserine is present on residues Ser1842 and Ser1845. Residues Ser2070, Ser2078, and Ser2081 each carry the phosphoserine modification. 2 disordered regions span residues 2091-2168 (FLSL…TSSP) and 2380-2471 (VGKY…QVYA). Thr2097 carries the phosphothreonine modification. Positions 2098-2107 (PMGKKSRRPS) are enriched in basic residues. 4 stretches are compositionally biased toward polar residues: residues 2108-2117 (AKSTMPTSLP), 2137-2150 (EKVQLSESSVTLSP), 2159-2168 (TYVSDTTSSP), and 2388-2406 (SQHSYASSNAAERTPSHSG). Positions 2417–2445 (PSPESPDQWSSSSPHSASDWSDVTTSPTP) are enriched in low complexity.

It belongs to the NOTCH family. In terms of assembly, heterodimer of a C-terminal fragment N(TM) and an N-terminal fragment N(EC) which are probably linked by disulfide bonds. Interacts with MAML1, MAML2 and MAML3 which act as transcriptional coactivators for NOTCH2. Interacts with RELA/p65. Interacts with HIF1AN. Interacts (via ANK repeats) with TCIM, the interaction inhibits the nuclear translocation of NOTCH2 N2ICD. Interacts with CUL1, RBX1, SKP1 and FBXW7 that are SCF(FBXW7) E3 ubiquitin-protein ligase complex components. Interacts with MINAR1; this interaction increases MINAR1 stability and function. Interacts with NOTCH2NL (NOTCH2NLA, NOTCH2NLB and/or NOTCH2NLC); leading to enhance Notch signaling pathway in a non-cell-autonomous manner. Interacts with MDK; this interaction mediates a nuclear accumulation of NOTCH2 and therefore activation of NOTCH2 signaling leading to interaction between HES1 and STAT3. Interacts with MINAR2. In terms of processing, synthesized in the endoplasmic reticulum as an inactive form which is proteolytically cleaved by a furin-like convertase in the trans-Golgi network before it reaches the plasma membrane to yield an active, ligand-accessible form. Cleavage results in a C-terminal fragment N(TM) and a N-terminal fragment N(EC). Following ligand binding, it is cleaved by TNF-alpha converting enzyme (TACE) to yield a membrane-associated intermediate fragment called notch extracellular truncation (NEXT). This fragment is then cleaved by presenilin dependent gamma-secretase to release a notch-derived peptide containing the intracellular domain (NICD) from the membrane. Hydroxylated by HIF1AN. Post-translationally, can be either O-glucosylated or O-xylosylated at Ser-613 by POGLUT1. In terms of processing, phosphorylated by GSK3. GSK3-mediated phosphorylation is necessary for NOTCH2 recognition by FBXW7, ubiquitination and degradation via the ubiquitin proteasome pathway. In terms of tissue distribution, expressed in the brain, heart, kidney, lung, skeletal muscle and liver. Ubiquitously expressed in the embryo.

It localises to the cell membrane. Its subcellular location is the nucleus. The protein localises to the cytoplasm. Its function is as follows. Functions as a receptor for membrane-bound ligands Jagged-1 (JAG1), Jagged-2 (JAG2) and Delta-1 (DLL1) to regulate cell-fate determination. Upon ligand activation through the released notch intracellular domain (NICD) it forms a transcriptional activator complex with RBPJ/RBPSUH and activates genes of the enhancer of split locus. Affects the implementation of differentiation, proliferation and apoptotic programs. Involved in bone remodeling and homeostasis. In collaboration with RELA/p65 enhances NFATc1 promoter activity and positively regulates RANKL-induced osteoclast differentiation. Positively regulates self-renewal of liver cancer cells. This chain is Neurogenic locus notch homolog protein 2, found in Homo sapiens (Human).